The primary structure comprises 470 residues: MSQNFGKISQVIGAVIDVEFEPGKLPPIYQALRVTNPAIDDQEFNLVLEVAQHLGENAVRTIAMDSTDGLVRGQQVKDMGKQISVPVGKKTLGRILNVIGEPVDEMGPIGNEKEYGIHREAPAFVNQSTKVEAFTTGIKVVDLLAPYARGGKIGLFGGAGVGKTVLIMELINNIAKQHGGFSVFAGVGERTREGNDLWMEMKESGVLDKAALVYGQMNEPPGARARVALSALSIAEYFRDEEGQDVLLFVDNIFRFTQAGSEVSALLGRIPSAVGYQPTLATEMGELQERITSTNKGSITSVQAIYVPADDLTDPAPATAFAHLDATTVLSRQIAELGIYPAVDPLDSTSRILDPQVIGDEHYAIARQVQYVLQKYKDLQDIIAILGMDELSEEDKLVVARARKIQKFLSQPFHVAEAFTGSPGKYVELKDTIKGFSEIIAGKHDDLPEQAFYMVGTIEEAIEKAQKLAV.

ATP is bound at residue Gly157–Thr164.

The protein belongs to the ATPase alpha/beta chains family. As to quaternary structure, F-type ATPases have 2 components, CF(1) - the catalytic core - and CF(0) - the membrane proton channel. CF(1) has five subunits: alpha(3), beta(3), gamma(1), delta(1), epsilon(1). CF(0) has three main subunits: a(1), b(2) and c(9-12). The alpha and beta chains form an alternating ring which encloses part of the gamma chain. CF(1) is attached to CF(0) by a central stalk formed by the gamma and epsilon chains, while a peripheral stalk is formed by the delta and b chains.

It localises to the cell inner membrane. It carries out the reaction ATP + H2O + 4 H(+)(in) = ADP + phosphate + 5 H(+)(out). In terms of biological role, produces ATP from ADP in the presence of a proton gradient across the membrane. The catalytic sites are hosted primarily by the beta subunits. The protein is ATP synthase subunit beta of Geobacter sp. (strain M21).